The sequence spans 884 residues: Cytosolic carboxypeptidase-like protein 5 (884 aa).

A Peptidase M14 domain is found at 157–570; the sequence is YPFSYSDCQD…AMAIAALDMA (414 aa). Zn(2+) is bound by residues His-252 and Glu-255. Disordered regions lie at residues 343 to 364 and 376 to 401; these read HPQSPSEHQHSPCLPPDAPLSD and HLGHTSDGDSPEDWTQTRPAEQKASG. Residue His-434 participates in Zn(2+) binding. Glu-516 serves as the catalytic Proton donor/acceptor. Disordered stretches follow at residues 603-737 and 784-859; these read LSST…HSTG and QVRP…RICY. Over residues 620 to 635 the composition is skewed to polar residues; that stretch reads PPRSNSGLPVSCSENP. Composition is skewed to low complexity over residues 641–666 and 714–737; these read SFSTGTSAGGSSSSQQNSPQMKNSPS and PTSSSLAPSPNPTSSSPASSHSTG. Ser-839 carries the phosphoserine modification. Polar residues predominate over residues 846-857; it reads ISCSLSDSQSRI.

This sequence belongs to the peptidase M14 family. It depends on Zn(2+) as a cofactor.

It is found in the cytoplasm. The protein resides in the cytosol. It localises to the nucleus. The protein localises to the cytoskeleton. Its subcellular location is the spindle. It is found in the midbody. The catalysed reaction is gamma-L-glutamyl-L-glutamyl-[protein] + H2O = L-glutamyl-[protein] + L-glutamate. It catalyses the reaction (L-glutamyl)(n+1)-gamma-L-glutamyl-L-glutamyl-[protein] + H2O = (L-glutamyl)(n)-gamma-L-glutamyl-L-glutamyl-[protein] + L-glutamate. The enzyme catalyses C-terminal L-alpha-aminoacyl-L-glutamyl-[tubulin] + H2O = C-terminal L-alpha-aminoacyl-[tubulin] + L-glutamate. It carries out the reaction C-terminal L-alpha-aminoacyl-L-glutamyl-L-glutamyl-[tubulin] + H2O = C-terminal L-alpha-aminoacyl-L-glutamyl-[tubulin] + L-glutamate. In terms of biological role, metallocarboxypeptidase that mediates deglutamylation of tubulin and non-tubulin target proteins. Catalyzes the removal of polyglutamate side chains present on the gamma-carboxyl group of glutamate residues within the C-terminal tail of alpha- and beta-tubulin. Cleaves alpha- and gamma-linked polyglutamate tubulin side-chain, as well as the branching point glutamate. Also catalyzes the removal of alpha-linked glutamate residues from the carboxy-terminus of alpha-tubulin. Mediates deglutamylation of nucleotidyltransferase CGAS, leading to CGAS antiviral defense response activation. This is Cytosolic carboxypeptidase-like protein 5 (AGBL5) from Ailuropoda melanoleuca (Giant panda).